The sequence spans 227 residues: DNA utilization protein YhgH (227 aa).

The protein belongs to the ComF/GntX family.

In terms of biological role, required for the use of extracellular DNA as a nutrient. Has been suggested to be involved in gluconate metabolism. The protein is DNA utilization protein YhgH of Escherichia coli (strain K12).